The primary structure comprises 319 residues: Ribosomal RNA small subunit methyltransferase H (319 aa).

Residues 39–41, Asp-59, Phe-83, Asp-104, and Gln-111 contribute to the S-adenosyl-L-methionine site; that span reads GGH.

The protein belongs to the methyltransferase superfamily. RsmH family.

The protein localises to the cytoplasm. It carries out the reaction cytidine(1402) in 16S rRNA + S-adenosyl-L-methionine = N(4)-methylcytidine(1402) in 16S rRNA + S-adenosyl-L-homocysteine + H(+). Its function is as follows. Specifically methylates the N4 position of cytidine in position 1402 (C1402) of 16S rRNA. This Ralstonia pickettii (strain 12J) protein is Ribosomal RNA small subunit methyltransferase H.